A 261-amino-acid polypeptide reads, in one-letter code: Probable membrane transporter protein XF_0764 (261 aa).

The next 8 helical transmembrane spans lie at 6 to 26 (LIVTIGSGGLVGFALGLLGGG), 29 to 49 (ILATPLLLYVVGVTNPHIAIG), 78 to 98 (VIFALVGTLGAFLGSSIGMLI), 99 to 119 (DGQRLLLLFGLLMAMVGLLML), 150 to 170 (AASGFFGIGGGFLIVPALIFA), 175 to 195 (TINAIGSSLLAVGTFGLITTL), 205 to 225 (WTIAMEFIVGGITGGGLGTLL), and 239 to 259 (VFGLIVIAVAIYVIWRSWASL).

The protein belongs to the 4-toluene sulfonate uptake permease (TSUP) (TC 2.A.102) family.

The protein localises to the cell membrane. The protein is Probable membrane transporter protein XF_0764 of Xylella fastidiosa (strain 9a5c).